The sequence spans 282 residues: ADP-ribosyl cyclase/cyclic ADP-ribose hydrolase (282 aa).

The N-terminal stretch at 1 to 24 (MSPVAIVACVCLAVTLTRISPSEA) is a signal peptide. Intrachain disulfides connect Cys39/Cys58, Cys75/Cys155, Cys136/Cys149, Cys230/Cys251, and Cys263/Cys272.

Belongs to the ADP-ribosyl cyclase family. In terms of tissue distribution, ovotestis.

Its subcellular location is the cytoplasmic vesicle. It carries out the reaction NAD(+) = cyclic ADP-beta-D-ribose + nicotinamide + H(+). It catalyses the reaction NAD(+) + H2O = ADP-D-ribose + nicotinamide + H(+). The enzyme catalyses nicotinate + NADP(+) = nicotinate-adenine dinucleotide phosphate + nicotinamide. Activity is presumably regulated by its sequestration in vesicles before egg fertilization. After fertilization and upon NADase release, it could then be regulated via its potential phosphorylation sites. Its function is as follows. Synthesizes cyclic ADP-ribose (cADPR), a second messenger for calcium mobilization from endoplasmic reticulum. Might make the Ca(2+) mobilizer nicotinate-adenine dinucleotide phosphate. Does not have cADPR hydrolase activity. The protein is ADP-ribosyl cyclase/cyclic ADP-ribose hydrolase of Aplysia kurodai (Kuroda's sea hare).